A 588-amino-acid chain; its full sequence is Beta-(1--&gt;2)glucan export ATP-binding/permease protein NdvA (588 aa).

One can recognise an ABC transmembrane type-1 domain in the interval Val21–Glu301. 6 helical membrane passes run Ala22 to Phe42, Pro57 to Ala77, Thr136 to Leu156, Leu158 to Gly178, Thr248 to Gly268, and Val272 to Met292. The ABC transporter domain maps to Val335–Thr569. Residue Gly368–Thr375 participates in ATP binding.

It belongs to the ABC transporter superfamily. Beta-(1--&gt;2)glucan exporter (TC 3.A.1.108.1) family. As to quaternary structure, homodimer.

It localises to the cell inner membrane. It catalyses the reaction [(1-&gt;2)-beta-D-glucosyl](n)(in) + ATP + H2O = [(1-&gt;2)-beta-D-glucosyl](n)(out) + ADP + phosphate + H(+). Its function is as follows. Involved in beta-(1--&gt;2)glucan export which is required for crown gall tumor formation. Transmembrane domains (TMD) form a pore in the inner membrane and the ATP-binding domain (NBD) is responsible for energy generation. This chain is Beta-(1--&gt;2)glucan export ATP-binding/permease protein NdvA, found in Rhizobium radiobacter (Agrobacterium tumefaciens).